We begin with the raw amino-acid sequence, 84 residues long: Cytochrome b559 subunit alpha (84 aa).

Residues 22–36 (VIHSITIPALFVAGW) traverse the membrane as a helical segment. Heme is bound at residue H24.

It belongs to the PsbE/PsbF family. Heterodimer of an alpha subunit and a beta subunit. PSII is composed of 1 copy each of membrane proteins PsbA, PsbB, PsbC, PsbD, PsbE, PsbF, PsbH, PsbI, PsbJ, PsbK, PsbL, PsbM, PsbT, PsbX, PsbY, PsbZ, Psb30/Ycf12, at least 3 peripheral proteins of the oxygen-evolving complex and a large number of cofactors. It forms dimeric complexes. Heme b is required as a cofactor.

Its subcellular location is the plastid. The protein resides in the chloroplast thylakoid membrane. In terms of biological role, this b-type cytochrome is tightly associated with the reaction center of photosystem II (PSII). PSII is a light-driven water:plastoquinone oxidoreductase that uses light energy to abstract electrons from H(2)O, generating O(2) and a proton gradient subsequently used for ATP formation. It consists of a core antenna complex that captures photons, and an electron transfer chain that converts photonic excitation into a charge separation. This Porphyra purpurea (Red seaweed) protein is Cytochrome b559 subunit alpha.